The chain runs to 105 residues: RxLR effector protein PITG_18670 (105 aa).

Positions 1-21 are cleaved as a signal peptide; sequence MRSIFYFALAFAALTCSNASA. The short motif at 39–57 is the RxLR-dEER element; the sequence is RSLRVAGQEVARGDRGEEI.

This sequence belongs to the RxLR effector family.

The protein resides in the secreted. It is found in the host nucleus. Its subcellular location is the host nucleolus. It localises to the host cytoplasm. In terms of biological role, effector that enhances P.infestans colonization of Nicotiana benthamiana leaves. In Phytophthora infestans (strain T30-4) (Potato late blight agent), this protein is RxLR effector protein PITG_18670.